The chain runs to 142 residues: Hemoglobin subunit alpha-A (142 aa).

One can recognise a Globin domain in the interval 2-142; it reads VLSANDKTNV…VGNVLTAKYR (141 aa). O2 is bound at residue His59. Residue His88 coordinates heme b.

Belongs to the globin family. As to quaternary structure, heterotetramer of two alpha chains and two beta chains. As to expression, red blood cells.

Its function is as follows. Involved in oxygen transport from the lung to the various peripheral tissues. In Aegypius monachus (Cinereous vulture), this protein is Hemoglobin subunit alpha-A (HBAA).